The sequence spans 427 residues: Nuclear distribution protein PAC1-2 (427 aa).

Residues 8–40 enclose the LisH domain; it reads QKDDLNKSIAEYLYAQDLTEIADSLCARLSLDY. Positions 58–82 form a coiled coil; that stretch reads SVIRLQKKLIESENRYTALQEDIAA. WD repeat units follow at residues 106 to 147, 149 to 187, 194 to 233, 236 to 275, 278 to 336, 339 to 378, and 381 to 420; these read SHRA…RTLK, HTREVWGVDFDSKGSFLATCSSDLSIKVWDTQQWDNAGY, GHEHTVSTVKFLPGDDLIASASRDKTIRIWEVATTFCIRT, GHEDWVRMTVPSTDGTLLGSCSSDNTARVWDPTSGVMKME, GHGH…ELRT, GHNDWIRGLVFHPSGKHLLSASDDKTIRVWELSTGRCMXV, and AHSHFITCLAWGPPVSAVARVELPRTPFCGDPKPIASRIM.

This sequence belongs to the WD repeat LIS1/nudF family. As to quaternary structure, self-associates. Interacts with NDL1 and dynein.

Its subcellular location is the cytoplasm. The protein localises to the cytoskeleton. It is found in the spindle pole. Positively regulates the activity of the minus-end directed microtubule motor protein dynein. May enhance dynein-mediated microtubule sliding by targeting dynein to the microtubule plus end. Required for nuclear migration during vegetative growth as well as development. Required for retrograde early endosome (EE) transport from the hyphal tip. Required for localization of dynein to the mitotic spindle poles. Recruits additional proteins to the dynein complex at SPBs. The polypeptide is Nuclear distribution protein PAC1-2 (Postia placenta (strain ATCC 44394 / Madison 698-R) (Brown rot fungus)).